Reading from the N-terminus, the 853-residue chain is DNA mismatch repair protein MutS (853 aa).

613-620 (GPNMGGKS) lines the ATP pocket.

Belongs to the DNA mismatch repair MutS family.

Its function is as follows. This protein is involved in the repair of mismatches in DNA. It is possible that it carries out the mismatch recognition step. This protein has a weak ATPase activity. This is DNA mismatch repair protein MutS from Vibrio atlanticus (strain LGP32) (Vibrio splendidus (strain Mel32)).